The chain runs to 101 residues: Small integral membrane protein 14 (101 aa).

Residues 71–81 (SDRRTADDAAI) are compositionally biased toward basic and acidic residues. Residues 71-101 (SDRRTADDAAIEKPTGSSDDNTPPPPPPSAM) form a disordered region. Residues 92-101 (TPPPPPPSAM) are compositionally biased toward pro residues.

In Caenorhabditis elegans, this protein is Small integral membrane protein 14.